A 352-amino-acid chain; its full sequence is Gap junction alpha-4 protein (352 aa).

At 2–23 (GDWEFLEKLLDQVQEHSTSIGK) the chain is on the cytoplasmic side. The chain crosses the membrane as a helical span at residues 24–46 (IWLMVLFIFRILILGLAGESVWG). The Extracellular portion of the chain corresponds to 47 to 76 (DEQSDFICNTEQPGCTNVCYDKAFPISHVR). The helical transmembrane segment at 77–99 (YWVLQFLFVSTPTLFYLGHVIYL) threads the bilayer. Over 100 to 153 (SRREEKLKQKESELRALDDKEQVEQAIAIIEKKKMKLYIQEDGTVKIKGALMCT) the chain is Cytoplasmic. Residues 154–176 (YLTSVIFKSLFEAGFLLGQWYLY) form a helical membrane-spanning segment. At 177–208 (GFVMTPIYVCERVPCPHKVDCFVSRPMEKTIF) the chain is on the extracellular side. A helical transmembrane segment spans residues 209-231 (IVFMLVVSLISLFLNVLELIHLV). The Cytoplasmic segment spans residues 232–352 (CKSMIDTLKK…SSSASKKQYV (121 aa)). Positions 330–352 (KTHSTMEKPSTRASSSASKKQYV) are disordered. Polar residues predominate over residues 340-352 (TRASSSASKKQYV).

This sequence belongs to the connexin family. Alpha-type (group II) subfamily. A connexon is composed of a hexamer of connexins.

It is found in the cell membrane. It localises to the cell junction. The protein resides in the gap junction. Functionally, one gap junction consists of a cluster of closely packed pairs of transmembrane channels, the connexons, through which materials of low MW diffuse from one cell to a neighboring cell. In Xenopus tropicalis (Western clawed frog), this protein is Gap junction alpha-4 protein (gja4).